Here is a 437-residue protein sequence, read N- to C-terminus: Probable glycine dehydrogenase (decarboxylating) subunit 1 (437 aa).

It belongs to the GcvP family. N-terminal subunit subfamily. In terms of assembly, the glycine cleavage system is composed of four proteins: P, T, L and H. In this organism, the P 'protein' is a heterodimer of two subunits.

The enzyme catalyses N(6)-[(R)-lipoyl]-L-lysyl-[glycine-cleavage complex H protein] + glycine + H(+) = N(6)-[(R)-S(8)-aminomethyldihydrolipoyl]-L-lysyl-[glycine-cleavage complex H protein] + CO2. In terms of biological role, the glycine cleavage system catalyzes the degradation of glycine. The P protein binds the alpha-amino group of glycine through its pyridoxal phosphate cofactor; CO(2) is released and the remaining methylamine moiety is then transferred to the lipoamide cofactor of the H protein. The sequence is that of Probable glycine dehydrogenase (decarboxylating) subunit 1 from Thermotoga maritima (strain ATCC 43589 / DSM 3109 / JCM 10099 / NBRC 100826 / MSB8).